The sequence spans 326 residues: H-2 class I histocompatibility antigen, Q8 alpha chain (326 aa).

The signal sequence occupies residues 1-21 (MALTMLLLLVAAALTLIETRA). The tract at residues 22–111 (GPHSLRYFHT…AQRYYNQSKG (90 aa)) is alpha-1. Topologically, residues 22-305 (GPHSLRYFHT…EPPPSTVSNM (284 aa)) are extracellular. N-linked (GlcNAc...) asparagine glycosylation is present at asparagine 107. Positions 112–203 (GSHTLQWMYG…QLRKETLLCT (92 aa)) are alpha-2. Cystine bridges form between cysteine 122–cysteine 185 and cysteine 224–cysteine 280. An alpha-3 region spans residues 204 to 295 (DPPKAHVTHH…GLPEPLTLRW (92 aa)). The region spanning 206–294 (PKAHVTHHPR…EGLPEPLTLR (89 aa)) is the Ig-like C1-type domain. Asparagine 277 is a glycosylation site (N-linked (GlcNAc...) asparagine). Residues 296-305 (EPPPSTVSNM) form a connecting peptide region. The chain crosses the membrane as a helical span at residues 306 to 326 (ANVAILVVLVAWPSLELWWIL).

It belongs to the MHC class I family. Heterodimer of an alpha chain and a beta chain (beta-2-microglobulin).

It localises to the membrane. In terms of biological role, involved in the presentation of foreign antigens to the immune system. This is H-2 class I histocompatibility antigen, Q8 alpha chain (H2-Q8) from Mus musculus (Mouse).